We begin with the raw amino-acid sequence, 266 residues long: Large ribosomal subunit protein eL8 (266 aa).

The segment covering 1–11 (MPKGKKAKGKK) has biased composition (basic residues). Disordered regions lie at residues 1-28 (MPKGKKAKGKKVAPAPSVAKKHEAKKVV) and 105-134 (ETKQEKKKRLLARAEQKAAGKGDAPTKRPP). Residues 116–130 (ARAEQKAAGKGDAPT) are compositionally biased toward basic and acidic residues.

It belongs to the eukaryotic ribosomal protein eL8 family. In terms of assembly, component of the large ribosomal subunit.

The protein localises to the cytoplasm. Component of the large ribosomal subunit. The ribosome is a large ribonucleoprotein complex responsible for the synthesis of proteins in the cell. This is Large ribosomal subunit protein eL8 (rpl7a) from Takifugu rubripes (Japanese pufferfish).